A 397-amino-acid polypeptide reads, in one-letter code: Succinate--CoA ligase [ADP-forming] subunit beta (397 aa).

The 246-residue stretch at 9–254 (KALLKGYGAP…ETEEDAKEIE (246 aa)) folds into the ATP-grasp domain. Residues Lys-46, 53 to 55 (GRG), Glu-109, Ala-112, and Glu-117 each bind ATP. Residues Asn-209 and Asp-223 each contribute to the Mg(2+) site. Substrate is bound by residues Asn-274 and 331–333 (GIM).

Belongs to the succinate/malate CoA ligase beta subunit family. In terms of assembly, heterotetramer of two alpha and two beta subunits. Requires Mg(2+) as cofactor.

It carries out the reaction succinate + ATP + CoA = succinyl-CoA + ADP + phosphate. It catalyses the reaction GTP + succinate + CoA = succinyl-CoA + GDP + phosphate. It participates in carbohydrate metabolism; tricarboxylic acid cycle; succinate from succinyl-CoA (ligase route): step 1/1. In terms of biological role, succinyl-CoA synthetase functions in the citric acid cycle (TCA), coupling the hydrolysis of succinyl-CoA to the synthesis of either ATP or GTP and thus represents the only step of substrate-level phosphorylation in the TCA. The beta subunit provides nucleotide specificity of the enzyme and binds the substrate succinate, while the binding sites for coenzyme A and phosphate are found in the alpha subunit. The chain is Succinate--CoA ligase [ADP-forming] subunit beta from Agrobacterium fabrum (strain C58 / ATCC 33970) (Agrobacterium tumefaciens (strain C58)).